Consider the following 188-residue polypeptide: dCTP deaminase (188 aa).

DCTP-binding positions include 111–116 (KSTYAR), 135–137 (TLE), Q156, Y170, and Q180. E137 acts as the Proton donor/acceptor in catalysis.

Belongs to the dCTP deaminase family. In terms of assembly, homotrimer.

The enzyme catalyses dCTP + H2O + H(+) = dUTP + NH4(+). The protein operates within pyrimidine metabolism; dUMP biosynthesis; dUMP from dCTP (dUTP route): step 1/2. Functionally, catalyzes the deamination of dCTP to dUTP. The polypeptide is dCTP deaminase (Francisella tularensis subsp. tularensis (strain FSC 198)).